Here is a 211-residue protein sequence, read N- to C-terminus: Ribosome maturation factor RimM (211 aa).

The PRC barrel domain maps to Pro-111–Leu-182. Residues Glu-184–Arg-211 form a disordered region. The segment covering Glu-189–Ala-204 has biased composition (low complexity).

The protein belongs to the RimM family. Binds ribosomal protein uS19.

Its subcellular location is the cytoplasm. Functionally, an accessory protein needed during the final step in the assembly of 30S ribosomal subunit, possibly for assembly of the head region. Essential for efficient processing of 16S rRNA. May be needed both before and after RbfA during the maturation of 16S rRNA. It has affinity for free ribosomal 30S subunits but not for 70S ribosomes. The protein is Ribosome maturation factor RimM of Clavibacter michiganensis subsp. michiganensis (strain NCPPB 382).